A 181-amino-acid polypeptide reads, in one-letter code: MEVNKKQLADIFGASIRTIQNWQEQGMPVLRGGGKGNEVLYDSAAVIKWYAERDAEIENEKLRREVEELLQASETDLQPGTIEYERHRLTRAQADAQELKNARDSAEVVETAFCTFVLSRIAGEIASILDGIPLSVQRRFPELENRHVDFLKRDIIKAMNKAAALDELIPGLLSEYIEQSG.

This sequence to phage lambda DNA packaging protein NU1.

The protein is DNA-packaging protein NU1 homolog (nohD) of Escherichia coli (strain K12).